Reading from the N-terminus, the 26-residue chain is DGVCSNRRQCNKEVCGSSYDVAIVGA.

It belongs to the flavin monoamine oxidase family. Monomer. It depends on FAD as a cofactor. In terms of processing, not glycosylated. As to expression, expressed by the ink gland.

It is found in the secreted. The enzyme catalyses an L-alpha-amino acid + O2 + H2O = a 2-oxocarboxylate + H2O2 + NH4(+). Functionally, catalyzes the oxidative deamination of positively charged L-amino acids L-Lys and L-Arg but not of amino acids L-His, L-Asp or L-Glu. Has antibacterial activity against the Gram-positive bacterium S.aureus (MIC=15 ug/ml). This antibacterial activity is bacteriostatic in the absence of amino acids L-Lys or L-Arg but bactericidal in their presence. The antibacterial effect is largely dependent on H(2)O(2) produced in the oxidative deamination of substrates. Has hemagglutinating activity towards rabbit erythrocytes. Hemagglutinating activity is inhibited by the glycoprotein fetuin, but not by glucose, mannose, galactose, N-acetylglucosamine, N-acetylgalactosamine or sialic acid. The sequence is that of L-amino-acid oxidase from Aplysia dactylomela (Spotted sea hare).